The chain runs to 407 residues: Probable 2,3-bisphosphoglycerate-independent phosphoglycerate mutase (407 aa).

The interval 175-200 (GSDAINDTDPQQVGKEPLEPKGENPN) is disordered.

It belongs to the BPG-independent phosphoglycerate mutase family. A-PGAM subfamily.

It catalyses the reaction (2R)-2-phosphoglycerate = (2R)-3-phosphoglycerate. Its pathway is carbohydrate degradation; glycolysis; pyruvate from D-glyceraldehyde 3-phosphate: step 3/5. Its function is as follows. Catalyzes the interconversion of 2-phosphoglycerate and 3-phosphoglycerate. In Aquifex aeolicus (strain VF5), this protein is Probable 2,3-bisphosphoglycerate-independent phosphoglycerate mutase.